Here is a 1016-residue protein sequence, read N- to C-terminus: Probable outer membrane protein PmpH (1016 aa).

A signal peptide spans 1 to 24 (MPFSLRSTSFCFLACLCSYSYGFA). The Autotransporter domain maps to 697–1016 (GELVPNSLWV…FVSMGLNRIF (320 aa)).

This sequence belongs to the PMP outer membrane protein family.

The protein localises to the secreted. Its subcellular location is the cell wall. The protein resides in the cell outer membrane. This chain is Probable outer membrane protein PmpH (pmpH), found in Chlamydia trachomatis serovar D (strain ATCC VR-885 / DSM 19411 / UW-3/Cx).